A 330-amino-acid polypeptide reads, in one-letter code: Phosphate acyltransferase (330 aa).

This sequence belongs to the PlsX family. As to quaternary structure, homodimer. Probably interacts with PlsY.

The protein resides in the cytoplasm. The enzyme catalyses a fatty acyl-[ACP] + phosphate = an acyl phosphate + holo-[ACP]. The protein operates within lipid metabolism; phospholipid metabolism. Its function is as follows. Catalyzes the reversible formation of acyl-phosphate (acyl-PO(4)) from acyl-[acyl-carrier-protein] (acyl-ACP). This enzyme utilizes acyl-ACP as fatty acyl donor, but not acyl-CoA. This is Phosphate acyltransferase from Streptococcus pneumoniae (strain ATCC 700669 / Spain 23F-1).